Here is a 166-residue protein sequence, read N- to C-terminus: Lipoprotein signal peptidase (166 aa).

A run of 4 helical transmembrane segments spans residues 11 to 31 (LNLVIILVVFIFDRTTKLYIL), 42 to 62 (IYITPFLNLFLIWNKGIAFGL), 69 to 89 (VIYNSITILIGLIIIAIIFMM), and 99 to 119 (FFALIAGGAFGNFYDRIVYTA). Active-site residues include Asp-122 and Asp-140. A helical membrane pass occupies residues 133–153 (WFVFNVADIFITIGVFCLILV).

This sequence belongs to the peptidase A8 family.

The protein localises to the cell inner membrane. The catalysed reaction is Release of signal peptides from bacterial membrane prolipoproteins. Hydrolyzes -Xaa-Yaa-Zaa-|-(S,diacylglyceryl)Cys-, in which Xaa is hydrophobic (preferably Leu), and Yaa (Ala or Ser) and Zaa (Gly or Ala) have small, neutral side chains.. The protein operates within protein modification; lipoprotein biosynthesis (signal peptide cleavage). Its function is as follows. This protein specifically catalyzes the removal of signal peptides from prolipoproteins. The protein is Lipoprotein signal peptidase of Pelagibacter ubique (strain HTCC1062).